A 185-amino-acid polypeptide reads, in one-letter code: Large ribosomal subunit protein uL16m (185 aa).

The protein belongs to the universal ribosomal protein uL16 family.

Its subcellular location is the mitochondrion. The chain is Large ribosomal subunit protein uL16m (RPL16) from Zea mays (Maize).